A 376-amino-acid polypeptide reads, in one-letter code: Cobalt-precorrin-5B C(1)-methyltransferase (376 aa).

Belongs to the CbiD family.

It catalyses the reaction Co-precorrin-5B + S-adenosyl-L-methionine = Co-precorrin-6A + S-adenosyl-L-homocysteine. It functions in the pathway cofactor biosynthesis; adenosylcobalamin biosynthesis; cob(II)yrinate a,c-diamide from sirohydrochlorin (anaerobic route): step 6/10. Its function is as follows. Catalyzes the methylation of C-1 in cobalt-precorrin-5B to form cobalt-precorrin-6A. In Bradyrhizobium sp. (strain BTAi1 / ATCC BAA-1182), this protein is Cobalt-precorrin-5B C(1)-methyltransferase.